The following is a 172-amino-acid chain: Adenine phosphoribosyltransferase (172 aa).

It belongs to the purine/pyrimidine phosphoribosyltransferase family. Homodimer.

It localises to the cytoplasm. It catalyses the reaction AMP + diphosphate = 5-phospho-alpha-D-ribose 1-diphosphate + adenine. It functions in the pathway purine metabolism; AMP biosynthesis via salvage pathway; AMP from adenine: step 1/1. Functionally, catalyzes a salvage reaction resulting in the formation of AMP, that is energically less costly than de novo synthesis. In Polynucleobacter necessarius subsp. necessarius (strain STIR1), this protein is Adenine phosphoribosyltransferase.